The chain runs to 429 residues: MPAIVIVGAQWGDEGKGKATDLLGGRVDYVVKPNGGNNAGHTVVVNGEKYELKLLPAGILSPNAIPIIGNGCVVNLEALFDEIDALKARGADTSKLRVSANAHLVAPYHQVLDKVTERFLGKRAIGTTGRGIGPAYMDKVARLGIRVQDVFDESILRQKVEGSLAQKNELLVKVYNRRAIDVEEIVAYFLGFAERLQPLVIDSTIELNNALDDGKVVLMEGGQATYLDVDHGTYPFVTSSNPTAGGSSVGSGIGPTRITRVVGIIKAYTTRVGAGPFPTELFDEMGEYLQKTGGEFGVNTGRPRRCGWYDAVLARHAARINGFTDYFVTKLDVLTGIEKIPVCVAYDVDGVRHEEMPMTQTEFHHAKPIFEYLDGWTEDISGAKTLDDLPENARNYVLELEKMSGTRFSAIGVGPDRDQTIVVHDLIDG.

GTP-binding positions include 12-18 (GDEGKGK) and 40-42 (GHT). Aspartate 13 (proton acceptor) is an active-site residue. Mg(2+) is bound by residues aspartate 13 and glycine 40. IMP contacts are provided by residues 13-16 (DEGK), 38-41 (NAGH), threonine 128, arginine 142, glutamine 223, threonine 238, and arginine 302. The active-site Proton donor is histidine 41. Residue 298–304 (VNTGRPR) participates in substrate binding. Residues arginine 304, 330–332 (KLD), and 412–414 (GVG) contribute to the GTP site.

This sequence belongs to the adenylosuccinate synthetase family. In terms of assembly, homodimer. It depends on Mg(2+) as a cofactor.

It is found in the cytoplasm. The enzyme catalyses IMP + L-aspartate + GTP = N(6)-(1,2-dicarboxyethyl)-AMP + GDP + phosphate + 2 H(+). It functions in the pathway purine metabolism; AMP biosynthesis via de novo pathway; AMP from IMP: step 1/2. Functionally, plays an important role in the de novo pathway of purine nucleotide biosynthesis. Catalyzes the first committed step in the biosynthesis of AMP from IMP. In Renibacterium salmoninarum (strain ATCC 33209 / DSM 20767 / JCM 11484 / NBRC 15589 / NCIMB 2235), this protein is Adenylosuccinate synthetase.